The sequence spans 464 residues: E3 ubiquitin-protein ligase RNF38 (464 aa).

Residues 1-94 (MRESEDSPSP…NSISQDENYH (94 aa)) form a disordered region. The Bipartite nuclear localization signal 1 motif lies at 6–20 (DSPSPKRQRLSHSVF). Over residues 38 to 53 (MTSNRQPPSVRPNQHH) the composition is skewed to polar residues. The short motif at 64 to 79 (RNRRSPPVRRQRGRRE) is the Bipartite nuclear localization signal 2 element. A compositionally biased stretch (basic residues) spans 64–83 (RNRRSPPVRRQRGRRERLSR). The RING-type zinc finger occupies 412 to 453 (CVVCMCDFESRQLLRVLPCNHEFHAKCVDKWLKGNRTCPICR).

The protein localises to the nucleus. It carries out the reaction S-ubiquitinyl-[E2 ubiquitin-conjugating enzyme]-L-cysteine + [acceptor protein]-L-lysine = [E2 ubiquitin-conjugating enzyme]-L-cysteine + N(6)-ubiquitinyl-[acceptor protein]-L-lysine.. Its pathway is protein modification; protein ubiquitination. Its function is as follows. Acts as an E3 ubiquitin-protein ligase able to ubiquitinate p53/TP53 which promotes its relocalization to discrete foci associated with PML nuclear bodies. Exhibits preference for UBE2D2 as a E2 enzyme. In Mus musculus (Mouse), this protein is E3 ubiquitin-protein ligase RNF38.